We begin with the raw amino-acid sequence, 113 residues long: Iron-sulfur cluster insertion protein ErpA (113 aa).

Positions 41, 105, and 107 each coordinate iron-sulfur cluster.

Belongs to the HesB/IscA family. In terms of assembly, homodimer. Iron-sulfur cluster is required as a cofactor.

Required for insertion of 4Fe-4S clusters for at least IspG. This Aliivibrio fischeri (strain ATCC 700601 / ES114) (Vibrio fischeri) protein is Iron-sulfur cluster insertion protein ErpA.